The primary structure comprises 1127 residues: Cellulose synthase-like protein D1 (1127 aa).

The interval 1-24 is disordered; sequence MASKGILKNGGKPPTAPSSAAPTV. 2 consecutive transmembrane segments (helical) span residues 262-282 and 292-312; these read VISP…LFLM and AIWL…SWVL. Catalysis depends on residues D392 and D828. The next 6 membrane-spanning stretches (helical) occupy residues 910-930, 936-956, 982-1002, 1025-1045, 1059-1079, and 1089-1109; these read VFLI…QFIV, TFLT…MLEI, LAAV…SFTL, SLMI…AVGF, LLGG…FAKG, and TIVY…WIAI.

Belongs to the glycosyltransferase 2 family. Plant cellulose synthase-like D subfamily.

The protein resides in the golgi apparatus membrane. Its function is as follows. Thought to be a Golgi-localized beta-glycan synthase that polymerize the backbones of noncellulosic polysaccharides (hemicelluloses) of plant cell wall. In Oryza sativa subsp. indica (Rice), this protein is Cellulose synthase-like protein D1 (CSLD1).